The primary structure comprises 104 residues: Large ribosomal subunit protein bL21 (104 aa).

This sequence belongs to the bacterial ribosomal protein bL21 family. Part of the 50S ribosomal subunit. Contacts protein L20.

This protein binds to 23S rRNA in the presence of protein L20. The protein is Large ribosomal subunit protein bL21 of Granulibacter bethesdensis (strain ATCC BAA-1260 / CGDNIH1).